A 354-amino-acid polypeptide reads, in one-letter code: UDP-N-acetylglucosamine--N-acetylmuramyl-(pentapeptide) pyrophosphoryl-undecaprenol N-acetylglucosamine transferase 3 (354 aa).

Residues 12–14 (TAG), Arg-163, Ser-193, and Gln-287 contribute to the UDP-N-acetyl-alpha-D-glucosamine site.

The protein belongs to the glycosyltransferase 28 family. MurG subfamily.

The protein resides in the cell membrane. It catalyses the reaction di-trans,octa-cis-undecaprenyl diphospho-N-acetyl-alpha-D-muramoyl-L-alanyl-D-glutamyl-meso-2,6-diaminopimeloyl-D-alanyl-D-alanine + UDP-N-acetyl-alpha-D-glucosamine = di-trans,octa-cis-undecaprenyl diphospho-[N-acetyl-alpha-D-glucosaminyl-(1-&gt;4)]-N-acetyl-alpha-D-muramoyl-L-alanyl-D-glutamyl-meso-2,6-diaminopimeloyl-D-alanyl-D-alanine + UDP + H(+). The protein operates within cell wall biogenesis; peptidoglycan biosynthesis. In terms of biological role, cell wall formation. Catalyzes the transfer of a GlcNAc subunit on undecaprenyl-pyrophosphoryl-MurNAc-pentapeptide (lipid intermediate I) to form undecaprenyl-pyrophosphoryl-MurNAc-(pentapeptide)GlcNAc (lipid intermediate II). In Bacillus cereus (strain ATCC 14579 / DSM 31 / CCUG 7414 / JCM 2152 / NBRC 15305 / NCIMB 9373 / NCTC 2599 / NRRL B-3711), this protein is UDP-N-acetylglucosamine--N-acetylmuramyl-(pentapeptide) pyrophosphoryl-undecaprenol N-acetylglucosamine transferase 3.